Reading from the N-terminus, the 344-residue chain is Phosphoribosylformylglycinamidine cyclo-ligase (344 aa).

Belongs to the AIR synthase family.

The protein localises to the cytoplasm. The catalysed reaction is 2-formamido-N(1)-(5-O-phospho-beta-D-ribosyl)acetamidine + ATP = 5-amino-1-(5-phospho-beta-D-ribosyl)imidazole + ADP + phosphate + H(+). It participates in purine metabolism; IMP biosynthesis via de novo pathway; 5-amino-1-(5-phospho-D-ribosyl)imidazole from N(2)-formyl-N(1)-(5-phospho-D-ribosyl)glycinamide: step 2/2. The sequence is that of Phosphoribosylformylglycinamidine cyclo-ligase from Haemophilus influenzae (strain PittEE).